A 378-amino-acid polypeptide reads, in one-letter code: UDP-N-acetylglucosamine--N-acetylmuramyl-(pentapeptide) pyrophosphoryl-undecaprenol N-acetylglucosamine transferase (378 aa).

UDP-N-acetyl-alpha-D-glucosamine is bound by residues 13–15, Asn124, Arg165, Ser193, and Gln294; that span reads TGG.

This sequence belongs to the glycosyltransferase 28 family. MurG subfamily.

Its subcellular location is the cell inner membrane. It carries out the reaction di-trans,octa-cis-undecaprenyl diphospho-N-acetyl-alpha-D-muramoyl-L-alanyl-D-glutamyl-meso-2,6-diaminopimeloyl-D-alanyl-D-alanine + UDP-N-acetyl-alpha-D-glucosamine = di-trans,octa-cis-undecaprenyl diphospho-[N-acetyl-alpha-D-glucosaminyl-(1-&gt;4)]-N-acetyl-alpha-D-muramoyl-L-alanyl-D-glutamyl-meso-2,6-diaminopimeloyl-D-alanyl-D-alanine + UDP + H(+). It functions in the pathway cell wall biogenesis; peptidoglycan biosynthesis. Functionally, cell wall formation. Catalyzes the transfer of a GlcNAc subunit on undecaprenyl-pyrophosphoryl-MurNAc-pentapeptide (lipid intermediate I) to form undecaprenyl-pyrophosphoryl-MurNAc-(pentapeptide)GlcNAc (lipid intermediate II). The sequence is that of UDP-N-acetylglucosamine--N-acetylmuramyl-(pentapeptide) pyrophosphoryl-undecaprenol N-acetylglucosamine transferase from Agrobacterium fabrum (strain C58 / ATCC 33970) (Agrobacterium tumefaciens (strain C58)).